Consider the following 2067-residue polypeptide: Nuclear receptor coactivator 6 (2067 aa).

The interval 1-932 is TBP/GTF2A-binding region; the sequence is MVLDDLPNFE…PPRKKKNCHQ (932 aa). The CREBBP-binding region stretch occupies residues 1-1060; that stretch reads MVLDDLPNFE…LPVSQNVHPP (1060 aa). The NCOA1-binding region stretch occupies residues 1–1314; the sequence is MVLDDLPNFE…QAHKLDSVVV (1314 aa). Residue Arg95 is modified to Asymmetric dimethylarginine. 2 disordered regions span residues 181 to 253 and 293 to 548; these read AVMT…RQMN and TRPL…PGNS. Residues 293 to 304 are compositionally biased toward low complexity; it reads TRPLQQHQQQPQ. 6 stretches are compositionally biased toward polar residues: residues 338 to 347, 357 to 372, 383 to 405, 421 to 457, 465 to 506, and 526 to 548; these read SLGTMTTNQG, MQAQ…TVQT, GSQQ…QFTA, PLQQ…QQQM, NPLS…QGPQ, and GQAN…PGNS. The segment at 777-931 is NCOA6IP-binding region; that stretch reads VNNSPSQVMG…KPPRKKKNCH (155 aa). Ser888 bears the Phosphoserine mark. The LXXLL motif 1 signature appears at 891-895; the sequence is LVNLL. Disordered stretches follow at residues 903–1279, 1313–1358, 1424–1481, 1497–1581, and 1769–1822; these read HFGV…QGLN, VVNS…APKL, NIPQ…EENK, QLLD…IPPV, and LNPD…GKGK. Positions 907 to 916 are enriched in low complexity; it reads NNKQNNTNAN. The segment covering 917–929 has biased composition (basic residues); it reads KPKKKKPPRKKKN. Positions 984 to 996 are enriched in low complexity; sequence QRPLPQMPPQLMQ. The span at 999-1024 shows a compositional bias: pro residues; sequence APPPQPPQQQPQPQLPQQQQPPPPSQ. A compositionally biased stretch (low complexity) spans 1025–1044; that stretch reads PQSQQQQQQQQMMMMLMMQQ. Arg1050 and Arg1061 each carry asymmetric dimethylarginine. The span at 1066–1078 shows a compositional bias: polar residues; it reads PDSQRMPVQQSGN. Asymmetric dimethylarginine is present on Arg1099. Residues 1103-1123 are compositionally biased toward polar residues; the sequence is SVNTPMGSNSRKMVYQENPQN. A compositionally biased stretch (low complexity) spans 1124 to 1137; that stretch reads SSSSPLGEMSSLPE. Composition is skewed to polar residues over residues 1152–1165, 1176–1194, and 1205–1217; these read NMPS…NQLM, LSAT…SLPS, and APTQ…TPNR. Residues 1222 to 1235 are compositionally biased toward pro residues; sequence PYYPQTPNNRPPST. A compositionally biased stretch (polar residues) spans 1313–1324; it reads VVNSGKQSNPGT. Residues 1326–1349 show a composition bias toward low complexity; it reads KRASPSNSRRSSPGSSRKTTPSPG. Residues 1424 to 1435 show a composition bias toward polar residues; the sequence is NIPQDSDCQNAQ. The LXXLL motif 2 motif lies at 1495 to 1499; the sequence is LSQLL. The span at 1545-1562 shows a compositional bias: low complexity; it reads EPSTSLSSPHSSEPCSTL. The interval 1644 to 2067 is EP300/CRSP3-binding region; it reads SEGQSAAQSN…AVQSKRRKSK (424 aa). Positions 1775 to 1805 are enriched in polar residues; that stretch reads SPQTNTSADQSTLPPSQPTTVVSSLLTNSPG. The span at 1806-1818 shows a compositional bias: low complexity; the sequence is SSANRRSPVSSSK. 2 positions are modified to N6-acetyllysine: Lys1822 and Lys1825. Disordered regions lie at residues 1840–1911 and 1957–2067; these read GSLE…LPGG and VGSH…RKSK. The span at 1871–1883 shows a compositional bias: polar residues; it reads EQCSTELDSKTPT. A compositionally biased stretch (low complexity) spans 1892 to 1904; that stretch reads MTSSPMAPSSTST. Residues 2005–2014 are compositionally biased toward basic and acidic residues; the sequence is EPKEIVEKSK. The residue at position 2022 (Ser2022) is a Phosphoserine.

In terms of assembly, monomer and homodimer. Interacts in vitro with the basal transcription factors GTF2A and TBP, suggesting an autonomous transactivation function. Interacts with NCOA1, CRSP3, RBM14, the histone acetyltransferase proteins EP300 and CREBBP, and with methyltransferase proteins NCOA6IP and PRMT2. Interacts with RBM39. Component of the MLL2/3 complex (also named ASCOM complex), at least composed of KMT2D/MLL2 or KMT2C/MLL3, ASH2L, RBBP5, WDR5, NCOA6, DPY30, KDM6A, PAXIP1/PTIP, PAGR1 and alpha- and beta-tubulin. Interacts with ZNF335; may enhance ligand-dependent transcriptional activation by nuclear hormone receptors. In terms of processing, phosphorylated. Widely expressed. High expression in testis and weak expression in small intestine.

It localises to the nucleus. Nuclear receptor coactivator that directly binds nuclear receptors and stimulates the transcriptional activities in a hormone-dependent fashion. Coactivates expression in an agonist- and AF2-dependent manner. Involved in the coactivation of different nuclear receptors, such as for steroids (GR and ERs), retinoids (RARs and RXRs), thyroid hormone (TRs), vitamin D3 (VDR) and prostanoids (PPARs). Probably functions as a general coactivator, rather than just a nuclear receptor coactivator. May also be involved in the coactivation of the NF-kappa-B pathway. May coactivate expression via a remodeling of chromatin and its interaction with histone acetyltransferase proteins. Involved in placental, cardiac, hepatic and embryonic development. In Mus musculus (Mouse), this protein is Nuclear receptor coactivator 6 (Ncoa6).